The primary structure comprises 314 residues: tRNA-cytidine(32) 2-sulfurtransferase (314 aa).

A PP-loop motif motif is present at residues 57–62 (SGGKDS). C132, C135, and C223 together coordinate [4Fe-4S] cluster.

The protein belongs to the TtcA family. In terms of assembly, homodimer. Mg(2+) is required as a cofactor. It depends on [4Fe-4S] cluster as a cofactor.

It localises to the cytoplasm. It carries out the reaction cytidine(32) in tRNA + S-sulfanyl-L-cysteinyl-[cysteine desulfurase] + AH2 + ATP = 2-thiocytidine(32) in tRNA + L-cysteinyl-[cysteine desulfurase] + A + AMP + diphosphate + H(+). It participates in tRNA modification. Functionally, catalyzes the ATP-dependent 2-thiolation of cytidine in position 32 of tRNA, to form 2-thiocytidine (s(2)C32). The sulfur atoms are provided by the cysteine/cysteine desulfurase (IscS) system. The polypeptide is tRNA-cytidine(32) 2-sulfurtransferase (Alkalilimnicola ehrlichii (strain ATCC BAA-1101 / DSM 17681 / MLHE-1)).